A 240-amino-acid chain; its full sequence is MTNITLSTQHYRIHRSDVEPVKEKTTEKDIFAKSITAVRNSFISLSTSLSDRFSLHQQTDIPTTHFHRGNASEGRAVLTSKTVKDFMLQKLNSLDIKGNASKDPAYARQTCEAILSAVYSNNKDQCCKLLISKGVSITPFLKEIGEAAQNAGLPGEIKNGVFTPGGAGANPFVVPLIASASIKYPHMFINHNQQVSFKAYAEKIVMKEVTPLFNKGTMPTPQQFQLTIENIANKYLQNAS.

The interval 78–240 (LTSKTVKDFM…IANKYLQNAS (163 aa)) is GEF catalytic domain.

This sequence belongs to the GEF (guanine exchange factor) SopE family.

The protein resides in the secreted. Functionally, activator for CDC42 by directly engaging this Rho GTPase and acting as potent guanine nucleotide exchange factor (GEF). This activation results in actin cytoskeleton rearrangements and stimulates membrane ruffling, promoting bacterial entry into non-phagocytic cells. Also activates NF-kB, p38 and ERK kinases, which are known to be involved in the induction of IL-8 expression. Chaperone InvB is required for secretion, translocation and stabilization of intracellular levels of sopE2. The polypeptide is Guanine nucleotide exchange factor sopE2 (sopE2) (Salmonella typhimurium (strain LT2 / SGSC1412 / ATCC 700720)).